Consider the following 541-residue polypeptide: Arginine--tRNA ligase (541 aa).

The short motif at 119–129 (ANPTGPLHIGH) is the 'HIGH' region element.

This sequence belongs to the class-I aminoacyl-tRNA synthetase family. In terms of assembly, monomer.

The protein resides in the cytoplasm. It carries out the reaction tRNA(Arg) + L-arginine + ATP = L-arginyl-tRNA(Arg) + AMP + diphosphate. In Helicobacter pylori (strain Shi470), this protein is Arginine--tRNA ligase.